The sequence spans 397 residues: 1-deoxy-D-xylulose 5-phosphate reductoisomerase (397 aa).

Residues Thr10, Gly11, Ser12, Ile13, Asn38, and Asn125 each coordinate NADPH. Lys126 contacts 1-deoxy-D-xylulose 5-phosphate. Residue Glu127 participates in NADPH binding. A Mn(2+)-binding site is contributed by Asp151. 1-deoxy-D-xylulose 5-phosphate contacts are provided by Ser152, Glu153, Ser187, and His210. Glu153 is a Mn(2+) binding site. Position 216 (Gly216) interacts with NADPH. 4 residues coordinate 1-deoxy-D-xylulose 5-phosphate: Ser223, Asn228, Lys229, and Glu232. Glu232 lines the Mn(2+) pocket.

This sequence belongs to the DXR family. As to quaternary structure, homodimer. The cofactor is Mg(2+). It depends on Mn(2+) as a cofactor.

The enzyme catalyses 2-C-methyl-D-erythritol 4-phosphate + NADP(+) = 1-deoxy-D-xylulose 5-phosphate + NADPH + H(+). It participates in isoprenoid biosynthesis; isopentenyl diphosphate biosynthesis via DXP pathway; isopentenyl diphosphate from 1-deoxy-D-xylulose 5-phosphate: step 1/6. Catalyzes the NADPH-dependent rearrangement and reduction of 1-deoxy-D-xylulose-5-phosphate (DXP) to 2-C-methyl-D-erythritol 4-phosphate (MEP). This is 1-deoxy-D-xylulose 5-phosphate reductoisomerase from Blochmanniella pennsylvanica (strain BPEN).